The sequence spans 1084 residues: Carbamoyl phosphate synthase large chain (1084 aa).

The segment at M1 to E401 is carboxyphosphate synthetic domain. ATP is bound by residues R129, R169, G175, G176, R208, L210, E215, G241, V242, H243, Q284, and E298. In terms of domain architecture, ATP-grasp 1 spans R133–V327. Mg(2+) is bound by residues Q284, E298, and N300. Residues Q284, E298, and N300 each coordinate Mn(2+). The oligomerization domain stretch occupies residues T402–A546. Residues V547 to G947 form a carbamoyl phosphate synthetic domain region. The 191-residue stretch at D672–A862 folds into the ATP-grasp 2 domain. Residues R708, R747, E753, G778, V779, H780, S781, Q821, and E833 each coordinate ATP. Residues Q821, E833, and N835 each contribute to the Mg(2+) site. Positions 821, 833, and 835 each coordinate Mn(2+). The region spanning V948–V1084 is the MGS-like domain. Positions V948–V1084 are allosteric domain.

Belongs to the CarB family. Composed of two chains; the small (or glutamine) chain promotes the hydrolysis of glutamine to ammonia, which is used by the large (or ammonia) chain to synthesize carbamoyl phosphate. Tetramer of heterodimers (alpha,beta)4. Mg(2+) is required as a cofactor. Requires Mn(2+) as cofactor.

The catalysed reaction is hydrogencarbonate + L-glutamine + 2 ATP + H2O = carbamoyl phosphate + L-glutamate + 2 ADP + phosphate + 2 H(+). It catalyses the reaction hydrogencarbonate + NH4(+) + 2 ATP = carbamoyl phosphate + 2 ADP + phosphate + 2 H(+). It functions in the pathway amino-acid biosynthesis; L-arginine biosynthesis; carbamoyl phosphate from bicarbonate: step 1/1. It participates in pyrimidine metabolism; UMP biosynthesis via de novo pathway; (S)-dihydroorotate from bicarbonate: step 1/3. Functionally, large subunit of the glutamine-dependent carbamoyl phosphate synthetase (CPSase). CPSase catalyzes the formation of carbamoyl phosphate from the ammonia moiety of glutamine, carbonate, and phosphate donated by ATP, constituting the first step of 2 biosynthetic pathways, one leading to arginine and/or urea and the other to pyrimidine nucleotides. The large subunit (synthetase) binds the substrates ammonia (free or transferred from glutamine from the small subunit), hydrogencarbonate and ATP and carries out an ATP-coupled ligase reaction, activating hydrogencarbonate by forming carboxy phosphate which reacts with ammonia to form carbamoyl phosphate. This is Carbamoyl phosphate synthase large chain from Symbiobacterium thermophilum (strain DSM 24528 / JCM 14929 / IAM 14863 / T).